Here is a 356-residue protein sequence, read N- to C-terminus: Dual-specificity RNA methyltransferase RlmN (356 aa).

Catalysis depends on glutamate 89, which acts as the Proton acceptor. In terms of domain architecture, Radical SAM core spans 108-341; the sequence is SHARYTICVS…CTIRESKGLD (234 aa). A disulfide bond links cysteine 115 and cysteine 346. Cysteine 122, cysteine 126, and cysteine 129 together coordinate [4Fe-4S] cluster. S-adenosyl-L-methionine contacts are provided by residues 172–173, serine 204, 227–229, and asparagine 303; these read GE and SLH. Cysteine 346 functions as the S-methylcysteine intermediate in the catalytic mechanism.

This sequence belongs to the radical SAM superfamily. RlmN family. It depends on [4Fe-4S] cluster as a cofactor.

The protein resides in the cytoplasm. It catalyses the reaction adenosine(2503) in 23S rRNA + 2 reduced [2Fe-2S]-[ferredoxin] + 2 S-adenosyl-L-methionine = 2-methyladenosine(2503) in 23S rRNA + 5'-deoxyadenosine + L-methionine + 2 oxidized [2Fe-2S]-[ferredoxin] + S-adenosyl-L-homocysteine. The catalysed reaction is adenosine(37) in tRNA + 2 reduced [2Fe-2S]-[ferredoxin] + 2 S-adenosyl-L-methionine = 2-methyladenosine(37) in tRNA + 5'-deoxyadenosine + L-methionine + 2 oxidized [2Fe-2S]-[ferredoxin] + S-adenosyl-L-homocysteine. Functionally, specifically methylates position 2 of adenine 2503 in 23S rRNA and position 2 of adenine 37 in tRNAs. m2A2503 modification seems to play a crucial role in the proofreading step occurring at the peptidyl transferase center and thus would serve to optimize ribosomal fidelity. The sequence is that of Dual-specificity RNA methyltransferase RlmN from Campylobacter jejuni subsp. jejuni serotype O:23/36 (strain 81-176).